Here is a 490-residue protein sequence, read N- to C-terminus: Adenylyltransferase and sulfurtransferase uba4 (490 aa).

Residues 33-54 (EAAKTPPYSDSTETDRGSSSST) form a disordered region. Residues Gly-96, Asp-117, 124–128 (SNLHR), Lys-141, and 185–186 (DH) each bind ATP. Zn(2+)-binding residues include Cys-234 and Cys-237. Catalysis depends on Cys-251, which acts as the Glycyl thioester intermediate; for adenylyltransferase activity. Zn(2+)-binding residues include Cys-323 and Cys-326. The 110-residue stretch at 379-488 (EHGKPVLLDV…WKREVDSTLP (110 aa)) folds into the Rhodanese domain. Residue Cys-443 is the Cysteine persulfide intermediate; for sulfurtransferase activity of the active site.

It in the N-terminal section; belongs to the HesA/MoeB/ThiF family. UBA4 subfamily. Requires Zn(2+) as cofactor.

The protein localises to the cytoplasm. Its subcellular location is the cytosol. It carries out the reaction [molybdopterin-synthase sulfur-carrier protein]-C-terminal Gly-Gly + ATP + H(+) = [molybdopterin-synthase sulfur-carrier protein]-C-terminal Gly-Gly-AMP + diphosphate. The enzyme catalyses [molybdopterin-synthase sulfur-carrier protein]-C-terminal Gly-Gly-AMP + S-sulfanyl-L-cysteinyl-[cysteine desulfurase] + AH2 = [molybdopterin-synthase sulfur-carrier protein]-C-terminal-Gly-aminoethanethioate + L-cysteinyl-[cysteine desulfurase] + A + AMP + 2 H(+). The protein operates within tRNA modification; 5-methoxycarbonylmethyl-2-thiouridine-tRNA biosynthesis. Its function is as follows. Plays a central role in 2-thiolation of mcm(5)S(2)U at tRNA wobble positions of cytosolic tRNA(Lys), tRNA(Glu) and tRNA(Gln). Also essential during biosynthesis of the molybdenum cofactor. Acts by mediating the C-terminal thiocarboxylation of sulfur carriers URM1 and MOCS2A. Its N-terminus first activates urm1 and MOCS2A as acyl-adenylates (-COAMP), then the persulfide sulfur on the catalytic cysteine is transferred to URM1 and MOCS2A to form thiocarboxylation (-COSH) of their C-terminus. The reaction probably involves hydrogen sulfide that is generated from the persulfide intermediate and that acts as a nucleophile towards URM1 and MOCS2A. Subsequently, a transient disulfide bond is formed. Does not use thiosulfate as sulfur donor; NFS1 probably acting as a sulfur donor for thiocarboxylation reactions. The polypeptide is Adenylyltransferase and sulfurtransferase uba4 (Pyricularia oryzae (strain 70-15 / ATCC MYA-4617 / FGSC 8958) (Rice blast fungus)).